The following is a 520-amino-acid chain: Glucose-1-phosphate adenylyltransferase small subunit, chloroplastic (520 aa).

A chloroplast-targeting transit peptide spans 1-71; the sequence is MASVSAIGVL…RNPIIVSPKA (71 aa).

This sequence belongs to the bacterial/plant glucose-1-phosphate adenylyltransferase family. As to quaternary structure, heterotetramer. Leaves.

It localises to the plastid. It is found in the chloroplast. The catalysed reaction is alpha-D-glucose 1-phosphate + ATP + H(+) = ADP-alpha-D-glucose + diphosphate. It participates in glycan biosynthesis; starch biosynthesis. With respect to regulation, activated by 3'phosphoglycerate, inhibited by orthophosphate. Allosteric regulation. In terms of biological role, this protein plays a role in synthesis of starch. It catalyzes the synthesis of the activated glycosyl donor, ADP-glucose from Glc-1-P and ATP. This is Glucose-1-phosphate adenylyltransferase small subunit, chloroplastic (APS1) from Arabidopsis thaliana (Mouse-ear cress).